We begin with the raw amino-acid sequence, 233 residues long: Phosphoribosylformylglycinamidine synthase subunit PurQ (233 aa).

The 231-residue stretch at 3–233 (SAILVFPGIN…GLVAHLERAA (231 aa)) folds into the Glutamine amidotransferase type-1 domain. The active-site Nucleophile is the C87. Residues H204 and E206 contribute to the active site.

Part of the FGAM synthase complex composed of 1 PurL, 1 PurQ and 2 PurS subunits.

It is found in the cytoplasm. It carries out the reaction N(2)-formyl-N(1)-(5-phospho-beta-D-ribosyl)glycinamide + L-glutamine + ATP + H2O = 2-formamido-N(1)-(5-O-phospho-beta-D-ribosyl)acetamidine + L-glutamate + ADP + phosphate + H(+). The enzyme catalyses L-glutamine + H2O = L-glutamate + NH4(+). Its pathway is purine metabolism; IMP biosynthesis via de novo pathway; 5-amino-1-(5-phospho-D-ribosyl)imidazole from N(2)-formyl-N(1)-(5-phospho-D-ribosyl)glycinamide: step 1/2. Its function is as follows. Part of the phosphoribosylformylglycinamidine synthase complex involved in the purines biosynthetic pathway. Catalyzes the ATP-dependent conversion of formylglycinamide ribonucleotide (FGAR) and glutamine to yield formylglycinamidine ribonucleotide (FGAM) and glutamate. The FGAM synthase complex is composed of three subunits. PurQ produces an ammonia molecule by converting glutamine to glutamate. PurL transfers the ammonia molecule to FGAR to form FGAM in an ATP-dependent manner. PurS interacts with PurQ and PurL and is thought to assist in the transfer of the ammonia molecule from PurQ to PurL. The polypeptide is Phosphoribosylformylglycinamidine synthase subunit PurQ (Nitrobacter hamburgensis (strain DSM 10229 / NCIMB 13809 / X14)).